The following is a 188-amino-acid chain: dCTP deaminase (188 aa).

Residues 111 to 116, 135 to 137, Q156, Y170, and Q180 each bind dCTP; these read KSTYAR and TLE. The active-site Proton donor/acceptor is E137.

It belongs to the dCTP deaminase family. In terms of assembly, homotrimer.

It carries out the reaction dCTP + H2O + H(+) = dUTP + NH4(+). It participates in pyrimidine metabolism; dUMP biosynthesis; dUMP from dCTP (dUTP route): step 1/2. Catalyzes the deamination of dCTP to dUTP. In Thiobacillus denitrificans (strain ATCC 25259 / T1), this protein is dCTP deaminase.